We begin with the raw amino-acid sequence, 344 residues long: Ion-translocating oxidoreductase complex subunit D (344 aa).

4 helical membrane-spanning segments follow: residues 23-43 (LVLGACVPGLLTLTWLYGPGT), 44-64 (LLNLAWASLVALACEAAMLAL), 77-99 (SALVTALLLAVALPPYAPWWLTL), and 120-140 (PFNPAMLGYVVALVSFPLEMT). Threonine 172 is subject to FMN phosphoryl threonine. 5 helical membrane-spanning segments follow: residues 198–218 (LGSAGSEWVNLAFLLGGLFLL), 222–242 (LFTWHAPLGMLAGLFAMSLLF), 252–272 (GSPLFHLFSGATMLGAFFIVT), 285–305 (LVFGLGVGVLTYVIRAWGGYP), and 306–326 (DGMAFAVLLMNLAAPTIDYYT).

Belongs to the NqrB/RnfD family. In terms of assembly, the complex is composed of six subunits: RnfA, RnfB, RnfC, RnfD, RnfE and RnfG. FMN serves as cofactor.

Its subcellular location is the cell inner membrane. Functionally, part of a membrane-bound complex that couples electron transfer with translocation of ions across the membrane. This is Ion-translocating oxidoreductase complex subunit D from Pseudomonas aeruginosa (strain LESB58).